Here is a 116-residue protein sequence, read N- to C-terminus: NADH-ubiquinone oxidoreductase chain 3 (116 aa).

3 helical membrane passes run 8 to 28 (VVATALVSLILAFIAFWLPSL), 56 to 76 (FFLIAILFLLFDLEIALLLPL), and 88 to 108 (TLLWTTTILVLLTLGLIYEWF).

The protein belongs to the complex I subunit 3 family.

The protein localises to the mitochondrion membrane. It catalyses the reaction a ubiquinone + NADH + 5 H(+)(in) = a ubiquinol + NAD(+) + 4 H(+)(out). Its function is as follows. Core subunit of the mitochondrial membrane respiratory chain NADH dehydrogenase (Complex I) that is believed to belong to the minimal assembly required for catalysis. Complex I functions in the transfer of electrons from NADH to the respiratory chain. The immediate electron acceptor for the enzyme is believed to be ubiquinone. The protein is NADH-ubiquinone oxidoreductase chain 3 (MT-ND3) of Scyliorhinus canicula (Small-spotted catshark).